The primary structure comprises 102 residues: Complement inhibitor RaCI6 (102 aa).

The first 24 residues, 1-24, serve as a signal peptide directing secretion; the sequence is MAALNGLVLLLLTISAMFISECYS. 2 disulfide bridges follow: Cys37-Cys61 and Cys42-Cys63.

Belongs to the RaCI family. As to expression, expressed in salivary glands.

It is found in the secreted. Its function is as follows. Complement inhibitor. Prevents complement-mediated C5 activation by binding to C5. Binds C5 at a different binding site than the other tick complement inhibitors OmCI and CirpT1, and the drug eculizumab. The sequence is that of Complement inhibitor RaCI6 from Dermacentor andersoni (Rocky mountain wood tick).